Reading from the N-terminus, the 586-residue chain is Phosphomethylpyrimidine synthase (586 aa).

The interval 1–59 is disordered; sequence MKQSVSAEQIELKSSLPGSKKVYVDGPREGMKVPMREIEQSETNGVPNPPIRVYDTSGP. The span at 22–39 shows a compositional bias: basic and acidic residues; that stretch reads VYVDGPREGMKVPMREIE. Substrate is bound by residues Asn-193, Met-222, Tyr-251, His-287, 307 to 309, 348 to 351, and Glu-387; these read SRG and DGLR. His-391 provides a ligand contact to Zn(2+). Residue Tyr-414 coordinates substrate. His-455 is a binding site for Zn(2+). Cys-535, Cys-538, and Cys-543 together coordinate [4Fe-4S] cluster.

This sequence belongs to the ThiC family. [4Fe-4S] cluster is required as a cofactor.

It catalyses the reaction 5-amino-1-(5-phospho-beta-D-ribosyl)imidazole + S-adenosyl-L-methionine = 4-amino-2-methyl-5-(phosphooxymethyl)pyrimidine + CO + 5'-deoxyadenosine + formate + L-methionine + 3 H(+). It functions in the pathway cofactor biosynthesis; thiamine diphosphate biosynthesis. In terms of biological role, catalyzes the synthesis of the hydroxymethylpyrimidine phosphate (HMP-P) moiety of thiamine from aminoimidazole ribotide (AIR) in a radical S-adenosyl-L-methionine (SAM)-dependent reaction. The sequence is that of Phosphomethylpyrimidine synthase from Bacillus cereus (strain ATCC 14579 / DSM 31 / CCUG 7414 / JCM 2152 / NBRC 15305 / NCIMB 9373 / NCTC 2599 / NRRL B-3711).